The sequence spans 915 residues: DNA repair-scaffolding protein (915 aa).

A compositionally biased stretch (basic residues) spans 1–15 (MPRGSRARGSKRKRS). 2 disordered regions span residues 1-30 (MPRG…RPLQ) and 56-114 (FQNT…EDKT). The span at 56–65 (FQNTSGNPSL) shows a compositional bias: polar residues. Over residues 67–85 (AEEKTITEKHLELCPRPKQ) the composition is skewed to basic and acidic residues. The segment covering 86–107 (ETTTSKSTSGLTDITWSSSGSD) has biased composition (polar residues). Positions 151 to 450 (EISDCASCAS…GTAWTHGHKE (300 aa)) are necessary for interaction with RAD51.

Found in a complex, at least composed of BLM, RAD51 and SPIDR; the complex formation is mediated by SPIDR. Interacts (via C-terminal region) with BLM; the interaction is direct. Interacts with RAD51; the interaction is direct. Interacts (via the C-terminal region) with FIGNL1 (via N-terminal one-half region); the interaction is direct.

Its subcellular location is the nucleus. Its function is as follows. Plays a role in DNA double-strand break (DBS) repair via homologous recombination (HR). Serves as a scaffolding protein that helps to promote the recruitment of DNA-processing enzymes like the helicase BLM and recombinase RAD51 to site of DNA damage, and hence contributes to maintain genomic integrity. The protein is DNA repair-scaffolding protein (SPIDR) of Homo sapiens (Human).